A 286-amino-acid polypeptide reads, in one-letter code: tRNA (guanine-N(7)-)-methyltransferase (286 aa).

2 positions are modified to phosphoserine: serine 7 and serine 59. S-adenosyl-L-methionine-binding positions include glycine 103, 126 to 127 (EI), 161 to 162 (NA), and cysteine 181. The active site involves aspartate 184. Residue 259-261 (TEE) coordinates S-adenosyl-L-methionine.

This sequence belongs to the class I-like SAM-binding methyltransferase superfamily. TrmB family. In terms of assembly, forms a complex with TRM82.

It localises to the nucleus. The enzyme catalyses guanosine(46) in tRNA + S-adenosyl-L-methionine = N(7)-methylguanosine(46) in tRNA + S-adenosyl-L-homocysteine. The protein operates within tRNA modification; N(7)-methylguanine-tRNA biosynthesis. In terms of biological role, methyltransferase that catalyzes the formation of N(7)-methylguanine at position 46 (m7G46) in tRNA, a modification required to maintain stability of tRNAs; its absence resulting in tRNA decay. Both the D-stem and T-stem structures of tRNAs are required for efficient methyltransferase activity. In Saccharomyces cerevisiae (strain RM11-1a) (Baker's yeast), this protein is tRNA (guanine-N(7)-)-methyltransferase.